Consider the following 71-residue polypeptide: Delta-actitoxin-Avd2b 2 (71 aa).

The first 20 residues, 1 to 20 (MNRLLVFLMLGAAFMLVVSA), serve as a signal peptide directing secretion. Residues 21 to 41 (NDAYGDEPAFKDLNQGDESLG) constitute a propeptide that is removed on maturation. 3 cysteine pairs are disulfide-bonded: cysteine 46–cysteine 61, cysteine 47–cysteine 55, and cysteine 49–cysteine 66.

It belongs to the sea anemone short toxin (type III) family.

The protein localises to the secreted. The protein resides in the nematocyst. In terms of biological role, voltage-gated sodium channel (Nav) inhibitor. 1 uM completely inhibits insect voltage-gated sodium channel inactivation (DmNav1 from D.melanogaster). The protein is Delta-actitoxin-Avd2b 2 of Anemonia viridis (Snakelocks anemone).